The following is a 550-amino-acid chain: Keratin, type II cytoskeletal 74 (550 aa).

The head stretch occupies residues 1 to 140 (MSRQLNIKSG…DPEIQKVRAQ (140 aa)). Residues 141–176 (EREQIMALNNKFASFIDKVRFLEQQNQVLGTKWELL) are coil 1A. The 328-residue stretch at 141–468 (EREQIMALNN…KLLEGEECWM (328 aa)) folds into the IF rod domain. The interval 177 to 195 (QQMDLNNCRKNLEPILEGY) is linker 1. The interval 196 to 287 (IGNLRKQLEM…CLYDAEVAQI (92 aa)) is coil 1B. The interval 288 to 311 (QTHTSETSVILSMDNNRYLDLDSI) is linker 12. Residues 312–464 (IAEVRAQYED…ATYSKLLEGE (153 aa)) are coil 2. The interval 465 to 550 (ECWMSGENPS…VSSRARKAAR (86 aa)) is tail. The segment at 491–550 (HPGSSASTDLGASTMASTGTSSSSSTQSGQTRAKGARVGDPKDSQDKSTPVSSRARKAAR) is disordered. The segment covering 502 to 521 (ASTMASTGTSSSSSTQSGQT) has biased composition (low complexity). Over residues 527 to 536 (RVGDPKDSQD) the composition is skewed to basic and acidic residues.

This sequence belongs to the intermediate filament family. As to quaternary structure, heterotetramer of two type I and two type II keratins.

In terms of biological role, has a role in hair formation. Specific component of keratin intermediate filaments in the inner root sheath (IRS) of the hair follicle. The polypeptide is Keratin, type II cytoskeletal 74 (KRT74) (Bos taurus (Bovine)).